We begin with the raw amino-acid sequence, 123 residues long: UPF0102 protein PSEEN4497 (123 aa).

It belongs to the UPF0102 family.

This Pseudomonas entomophila (strain L48) protein is UPF0102 protein PSEEN4497.